We begin with the raw amino-acid sequence, 355 residues long: Guanine nucleotide-binding protein subunit alpha-14 (355 aa).

In terms of domain architecture, G-alpha spans 34–355 (RELKLLLLGT…QLNLREFNLV (322 aa)). A G1 motif region spans residues 37–50 (KLLLLGTGESGKST). Residues 42–49 (GTGESGKS), 176–182 (LRVRVPT), 201–205 (DVGGQ), 270–273 (NKKD), and Ala327 contribute to the GTP site. Mg(2+) contacts are provided by Ser49 and Thr182. The tract at residues 174–182 (DVLRVRVPT) is G2 motif. The G3 motif stretch occupies residues 197–206 (FRMVDVGGQR). The tract at residues 266–273 (ILFLNKKD) is G4 motif. The interval 325–330 (TCATDT) is G5 motif.

Belongs to the G-alpha family. G(q) subfamily. G proteins are composed of 3 units; alpha, beta and gamma. The alpha chain contains the guanine nucleotide binding site.

In terms of biological role, guanine nucleotide-binding proteins (G proteins) are involved as modulators or transducers in various transmembrane signaling systems. This Bos taurus (Bovine) protein is Guanine nucleotide-binding protein subunit alpha-14 (GNA14).